The following is a 70-amino-acid chain: Large ribosomal subunit protein bL31 (70 aa).

The Zn(2+) site is built by C16, C18, C37, and C40.

Belongs to the bacterial ribosomal protein bL31 family. Type A subfamily. As to quaternary structure, part of the 50S ribosomal subunit. Zn(2+) serves as cofactor.

Functionally, binds the 23S rRNA. The sequence is that of Large ribosomal subunit protein bL31 from Haemophilus influenzae (strain 86-028NP).